We begin with the raw amino-acid sequence, 923 residues long: Meiotic recombination protein rec11 (923 aa).

Residues 278 to 365 (LFSRIHDIRA…DRFSLRIVEI (88 aa)) enclose the SCD domain.

This is Meiotic recombination protein rec11 (rec11) from Schizosaccharomyces pombe (strain 972 / ATCC 24843) (Fission yeast).